Consider the following 145-residue polypeptide: Large ribosomal subunit protein uL11 (145 aa).

Belongs to the universal ribosomal protein uL11 family. Part of the ribosomal stalk of the 50S ribosomal subunit. Interacts with L10 and the large rRNA to form the base of the stalk. L10 forms an elongated spine to which L12 dimers bind in a sequential fashion forming a multimeric L10(L12)X complex. In terms of processing, one or more lysine residues are methylated.

Functionally, forms part of the ribosomal stalk which helps the ribosome interact with GTP-bound translation factors. In Rickettsia africae (strain ESF-5), this protein is Large ribosomal subunit protein uL11.